The following is a 110-amino-acid chain: Cyclin-dependent protein kinase inhibitor SMR8 (110 aa).

As to quaternary structure, interacts with CDKA-1 and D-type cyclins. In terms of tissue distribution, expressed in the root vascular tissue.

Its function is as follows. Probable cyclin-dependent protein kinase (CDK) inhibitor that functions as a repressor of mitosis in the endoreduplication cell cycle. This chain is Cyclin-dependent protein kinase inhibitor SMR8, found in Arabidopsis thaliana (Mouse-ear cress).